A 336-amino-acid chain; its full sequence is Tryptophan--tRNA ligase (336 aa).

ATP is bound by residues 15–17 (QPT) and 24–25 (GN). The 'HIGH' region signature appears at 16-25 (PTSDSLHLGN). Asp-141 serves as a coordination point for L-tryptophan. Residues 153–155 (GED), Ile-192, and 201–205 (KMSKS) contribute to the ATP site. Positions 201–205 (KMSKS) match the 'KMSKS' region motif.

The protein belongs to the class-I aminoacyl-tRNA synthetase family. Homodimer.

It localises to the cytoplasm. The enzyme catalyses tRNA(Trp) + L-tryptophan + ATP = L-tryptophyl-tRNA(Trp) + AMP + diphosphate + H(+). Catalyzes the attachment of tryptophan to tRNA(Trp). This is Tryptophan--tRNA ligase from Mycobacterium tuberculosis (strain CDC 1551 / Oshkosh).